A 167-amino-acid polypeptide reads, in one-letter code: U-scoloptoxin(08)-Er5a (167 aa).

The signal sequence occupies residues 1 to 22; sequence MKTNCEFPLLCLLIVLVANVEG. Residues 23-94 constitute a propeptide that is removed on maturation; it reads EVEDTGLKMV…KRLWRNWERR (72 aa). RLWRNWE repeat units lie at residues 34 to 40, 61 to 67, and 86 to 92; these read RLWRNWE. Residue Gln95 is modified to Pyrrolidone carboxylic acid. One copy of the RLWRNWE 4; approximate repeat lies at 107–113; sequence ELWRNWE. Positions 112-118 are excised as a propeptide; it reads WEDLKRR. Gln119 carries the post-translational modification Pyrrolidone carboxylic acid. The RLWRNWE 5 repeat unit spans residues 134-140; it reads RLWRNWE. Positions 139 to 167 are excised as a propeptide; it reads WEDNHATLRKRSADSLSRQKRLGKERGKE. A disordered region spans residues 147–167; sequence RKRSADSLSRQKRLGKERGKE.

Belongs to the scoloptoxin-08 family. In terms of tissue distribution, expressed by the venom gland.

Its subcellular location is the secreted. In Ethmostigmus rubripes (Giant centipede), this protein is U-scoloptoxin(08)-Er5a.